Reading from the N-terminus, the 262-residue chain is Ribosome biogenesis GTPase A (262 aa).

In terms of domain architecture, CP-type G spans 12–157 (KRQIKDLLRL…ILDTPGILYK (146 aa)). Residues 54–57 (NKVD), 109–114 (NTGKST), and glycine 153 each bind GTP.

Belongs to the TRAFAC class YlqF/YawG GTPase family. MTG1 subfamily.

Its subcellular location is the cytoplasm. Its function is as follows. Required for a late step of 50S ribosomal subunit assembly. Has GTPase activity. Binds to the 23S rRNA. This chain is Ribosome biogenesis GTPase A, found in Thermotoga maritima (strain ATCC 43589 / DSM 3109 / JCM 10099 / NBRC 100826 / MSB8).